The chain runs to 497 residues: Probable cytosol aminopeptidase (497 aa).

Residues Lys-263 and Asp-268 each coordinate Mn(2+). Residue Lys-275 is part of the active site. Mn(2+) is bound by residues Asp-286, Asp-345, and Glu-347. Arg-349 is a catalytic residue.

This sequence belongs to the peptidase M17 family. The cofactor is Mn(2+).

It localises to the cytoplasm. It catalyses the reaction Release of an N-terminal amino acid, Xaa-|-Yaa-, in which Xaa is preferably Leu, but may be other amino acids including Pro although not Arg or Lys, and Yaa may be Pro. Amino acid amides and methyl esters are also readily hydrolyzed, but rates on arylamides are exceedingly low.. The catalysed reaction is Release of an N-terminal amino acid, preferentially leucine, but not glutamic or aspartic acids.. Presumably involved in the processing and regular turnover of intracellular proteins. Catalyzes the removal of unsubstituted N-terminal amino acids from various peptides. In Rhizobium meliloti (strain 1021) (Ensifer meliloti), this protein is Probable cytosol aminopeptidase.